The chain runs to 194 residues: Dephospho-CoA kinase (194 aa).

Residues 3–194 (TIGLTGGIGS…EQVDGFWGGL (192 aa)) form the DPCK domain. 11–16 (GSGKST) is an ATP binding site.

This sequence belongs to the CoaE family.

It localises to the cytoplasm. The enzyme catalyses 3'-dephospho-CoA + ATP = ADP + CoA + H(+). The protein operates within cofactor biosynthesis; coenzyme A biosynthesis; CoA from (R)-pantothenate: step 5/5. Functionally, catalyzes the phosphorylation of the 3'-hydroxyl group of dephosphocoenzyme A to form coenzyme A. The protein is Dephospho-CoA kinase of Corynebacterium jeikeium (strain K411).